Consider the following 325-residue polypeptide: Ribonucleoside-diphosphate reductase small chain (325 aa).

The Fe cation site is built by Asp-74, Glu-105, and His-108. Tyr-112 is a catalytic residue. Residues Glu-168, Glu-202, and His-205 each coordinate Fe cation.

It belongs to the ribonucleoside diphosphate reductase small chain family. In terms of assembly, heterodimer of a large and a small chain. The cofactor is Fe cation.

It catalyses the reaction a 2'-deoxyribonucleoside 5'-diphosphate + [thioredoxin]-disulfide + H2O = a ribonucleoside 5'-diphosphate + [thioredoxin]-dithiol. Functionally, ribonucleoside-diphosphate reductase holoenzyme provides the precursors necessary for viral DNA synthesis. Allows virus growth in non-dividing cells. Catalyzes the biosynthesis of deoxyribonucleotides from the corresponding ribonucleotides. In Yaba-like disease virus (YLDV), this protein is Ribonucleoside-diphosphate reductase small chain.